Here is a 294-residue protein sequence, read N- to C-terminus: Acetyl-coenzyme A carboxylase carboxyl transferase subunit beta (294 aa).

The region spanning 30–294 (IMTKCPECKK…PEAGGESDGE (265 aa)) is the CoA carboxyltransferase N-terminal domain. Zn(2+) contacts are provided by Cys34, Cys37, Cys53, and Cys56. The segment at 34 to 56 (CPECKKIMYTKELQKNLMVCNYC) adopts a C4-type zinc-finger fold.

This sequence belongs to the AccD/PCCB family. As to quaternary structure, acetyl-CoA carboxylase is a heterohexamer composed of biotin carboxyl carrier protein (AccB), biotin carboxylase (AccC) and two subunits each of ACCase subunit alpha (AccA) and ACCase subunit beta (AccD). The cofactor is Zn(2+).

It is found in the cytoplasm. It carries out the reaction N(6)-carboxybiotinyl-L-lysyl-[protein] + acetyl-CoA = N(6)-biotinyl-L-lysyl-[protein] + malonyl-CoA. Its pathway is lipid metabolism; malonyl-CoA biosynthesis; malonyl-CoA from acetyl-CoA: step 1/1. In terms of biological role, component of the acetyl coenzyme A carboxylase (ACC) complex. Biotin carboxylase (BC) catalyzes the carboxylation of biotin on its carrier protein (BCCP) and then the CO(2) group is transferred by the transcarboxylase to acetyl-CoA to form malonyl-CoA. In Listeria innocua serovar 6a (strain ATCC BAA-680 / CLIP 11262), this protein is Acetyl-coenzyme A carboxylase carboxyl transferase subunit beta.